Consider the following 407-residue polypeptide: Tyrosine--tRNA ligase (407 aa).

Residue Tyr-35 participates in L-tyrosine binding. The 'HIGH' region signature appears at 40 to 49; that stretch reads PTADSLHVGH. The L-tyrosine site is built by Tyr-168 and Gln-172. The short motif at 228–232 is the 'KMSKS' region element; the sequence is KMGKT. Lys-231 contributes to the ATP binding site. The 65-residue stretch at 341-405 folds into the S4 RNA-binding domain; the sequence is NPLVDLLAKC…RGKKNFNRIV (65 aa).

This sequence belongs to the class-I aminoacyl-tRNA synthetase family. TyrS type 1 subfamily. Homodimer.

It localises to the cytoplasm. The catalysed reaction is tRNA(Tyr) + L-tyrosine + ATP = L-tyrosyl-tRNA(Tyr) + AMP + diphosphate + H(+). Catalyzes the attachment of tyrosine to tRNA(Tyr) in a two-step reaction: tyrosine is first activated by ATP to form Tyr-AMP and then transferred to the acceptor end of tRNA(Tyr). The sequence is that of Tyrosine--tRNA ligase from Clostridium botulinum (strain 657 / Type Ba4).